Reading from the N-terminus, the 511-residue chain is Probable lipid II flippase MurJ (511 aa).

13 consecutive transmembrane segments (helical) span residues 31 to 51, 90 to 110, 130 to 150, 159 to 179, 182 to 202, 237 to 257, 271 to 291, 314 to 334, 354 to 374, 383 to 403, 407 to 427, 443 to 463, and 481 to 501; these read IFGAGMATDAFFVAFKLPNLL, LLTLALAVVTVAGMLAAPWVI, LLKITFPYILLISLASLVGAI, IPAFAPTLLNISMIGFALFAA, FNPPVLALAWAVTVGGVLQLV, ILGVSVSQISLIINTIFASFL, LMEFPSGVLGVALGTILLPSL, CFLLALPSAVALGILSGPLTV, LIAYSVGLIGLIVVKVLAPGF, PVKIAIVTLILTQLMNLAFIG, HAGLSLSIGLAACLNASLLYW, AFLLRLVVAVLVMSGVLLGML, and LMAVVLAGIAAYFAALAVLGF.

The protein belongs to the MurJ/MviN family.

It is found in the cell inner membrane. It functions in the pathway cell wall biogenesis; peptidoglycan biosynthesis. Involved in peptidoglycan biosynthesis. Transports lipid-linked peptidoglycan precursors from the inner to the outer leaflet of the cytoplasmic membrane. This chain is Probable lipid II flippase MurJ, found in Escherichia coli O157:H7.